The following is a 795-amino-acid chain: MEAIKPLPQVSSFSASVFSFLDGRFKESTDLSHSTGLVSELQTEISELDQRLAGLNRQLESGLAAYASFSDRVGGLFFEVNAKLADLSSSTSVTRSASDSGKEEEATEHVAGEDLPSLAKEVAQVESVRAYAETALKLDTLVGDIEDAVMSSLNKNLRTSRSSGFEEVRLHAIKTLKTTEEILSSVAKRHPRWARLVSAVDHRVDRALAMMRPQAIADYRALLSSLRWPPQLSTLTSASLDSKSENVQNPLFNMEGSLKSQYCGSFHALCSLQGLQLQRKSRQLGIHKGENVLFHQPLWAIEELVNPLTVASQRHFTKWSEKPEFIFALVYKITRDYVDSMDELLQPLVDEAKLAGYSCREEWVSAMVSSLSLYLVKEIFPIYVGQLDEANETDLRSEAKVSWLHLIDLMISFDKRVQSLVSQSGILSLQEDGNLLRISSLSVFCDRPDWLDLWAEIELDERLVKFKEEIDNDRNWTAKVQDELISSSNVYRPPIISSIFLQHLSSIIERSKSVPALYLRARFLRLAASPTIHKFLDCLLLRCQDADGLTALTENNDLIKVSNSINAGHYIESVLEEWSEDVFFLEMGTGQHDPQEVPGLENFTEPSEGIFGEEFEKLEKFRLEWINKLSVVILRGFDARIREYIKNRKQWQEKKDKEWTVSRALVGALDYLQGKTSIIEENLNKADFTAMWRTLASEIDKLFFNSILMANVKFTNDGVERLKVDMEVLYGVFRTWCVRPEGFFPKLSEGLTLLKMEEKQVKDGLSRGDKWLRENRIRYLSEAEAKKVAKSRVFS.

Positions 35 to 64 (TGLVSELQTEISELDQRLAGLNRQLESGLA) form a coiled coil. Residues 91-111 (TSVTRSASDSGKEEEATEHVA) are disordered. The span at 100 to 111 (SGKEEEATEHVA) shows a compositional bias: basic and acidic residues. The RINT1/TIP20 domain occupies 207 to 795 (ALAMMRPQAI…KKVAKSRVFS (589 aa)).

This sequence belongs to the RINT1 family. Interacts with SEC20 and SYP81. Interacts with ZW10 (via the central region). Forms a complex with ZW10/MIP1, MIP2 and MIP3 on the endoplasmic reticulum. In terms of tissue distribution, highly expressed in dry seeds. Expressed at low levels in roots, rosette and cauline leaves, stems and flowers.

It localises to the endoplasmic reticulum membrane. In terms of biological role, functions in the anterograde transport of storage protein precursors from the endoplasmic reticulum (ER) to the Golgi complex and in the retrograde transport from the Golgi complex to the ER. Forms a complex with ZW10/MIP1, MIP2 and MIP3 on the ER that may be responsible for efficient transport of seed storage proteins. Required for the responses to environmental stresses during seed germination and vegetative growth. Probably not involved in the retrograde transport from the ER to the apoplast. This is RINT1-like protein MAG2 from Arabidopsis thaliana (Mouse-ear cress).